Reading from the N-terminus, the 557-residue chain is Tektin-5 (557 aa).

Positions 302–386 (DNIRHAQNMR…LLERAIVAKE (85 aa)) form a coiled coil. 6 repeat units span residues 507-512 (CSGSAL), 513-518 (CKGPAS), 519-524 (CGGGAS), 525-530 (CGGGAS), 531-536 (CGGHAP), and 537-541 (CGSAL). Residues 507–541 (CSGSALCKGPASCGGGASCGGGASCGGHAPCGSAL) form a 6 X 6 AA approximate tandem repeats of C-[GSK]-G-[GSPH]-A-[SLP] region.

This sequence belongs to the tektin family. Microtubule inner protein component of sperm flagellar doublet microtubules. Interacts with TEKT3. Ubiquitinated, leading to its degradation. Deubiquitinated by USP16, promoting its stability. As to expression, strongly expressed in germ cells of the testis (at protein level). Expressed in spermatozoa. Also detected in brain.

It is found in the cytoplasm. Its subcellular location is the cytoskeleton. The protein localises to the flagellum axoneme. In terms of biological role, sperm-specific microtubule inner protein (MIP) part of the dynein-decorated doublet microtubules (DMTs) in flagellar axoneme. Forms an extensive interaction network in different conformations that reinforces the helix bundle composed by other tektin proteins (TEKT1 to TEKT4) and MIPs to anchor the tektin bundle onto the tubulin wall of A-tubule of the sperm flagellum. This is Tektin-5 from Mus musculus (Mouse).